The primary structure comprises 404 residues: F-box protein At3g57590 (404 aa).

Residues 1 to 47 (MEPIPNDLILEIFSRLPAKSVIGFRTLSKHWASILRSPVFTELFLTR) form the F-box domain.

This is F-box protein At3g57590 from Arabidopsis thaliana (Mouse-ear cress).